The following is a 419-amino-acid chain: Pyrophosphate--fructose 6-phosphate 1-phosphotransferase (419 aa).

G13 contacts diphosphate. Residues 142–144, 190–192, E247, and 297–300 contribute to the substrate site; these read TVD, MGR, and YLQR. D144 serves as the catalytic Proton acceptor.

Belongs to the phosphofructokinase type A (PFKA) family. PPi-dependent PFK group II subfamily. Clade 'B2' sub-subfamily. Homodimer. Mg(2+) serves as cofactor.

The protein localises to the cytoplasm. The catalysed reaction is beta-D-fructose 6-phosphate + diphosphate = beta-D-fructose 1,6-bisphosphate + phosphate + H(+). The protein operates within carbohydrate degradation; glycolysis; D-glyceraldehyde 3-phosphate and glycerone phosphate from D-glucose: step 3/4. With respect to regulation, non-allosteric. Functionally, catalyzes the phosphorylation of D-fructose 6-phosphate, the first committing step of glycolysis. Uses inorganic phosphate (PPi) as phosphoryl donor instead of ATP like common ATP-dependent phosphofructokinases (ATP-PFKs), which renders the reaction reversible, and can thus function both in glycolysis and gluconeogenesis. Consistently, PPi-PFK can replace the enzymes of both the forward (ATP-PFK) and reverse (fructose-bisphosphatase (FBPase)) reactions. The protein is Pyrophosphate--fructose 6-phosphate 1-phosphotransferase of Halomonas elongata (strain ATCC 33173 / DSM 2581 / NBRC 15536 / NCIMB 2198 / 1H9).